The sequence spans 159 residues: Nucleotide-binding protein Avin_13410 (159 aa).

It belongs to the YajQ family.

Nucleotide-binding protein. The sequence is that of Nucleotide-binding protein Avin_13410 from Azotobacter vinelandii (strain DJ / ATCC BAA-1303).